A 68-amino-acid polypeptide reads, in one-letter code: Large ribosomal subunit protein bL35 (68 aa).

Basic residues-rich tracts occupy residues 1-11 (MPKLKTRSSAK) and 19-29 (SGKVKHGKAFA). The tract at residues 1-54 (MPKLKTRSSAKKRFDVKKSGKVKHGKAFAKHLFTFSKTPKSKRSNRGTGHLRDM) is disordered.

It belongs to the bacterial ribosomal protein bL35 family.

The sequence is that of Large ribosomal subunit protein bL35 from Myxococcus xanthus (strain DK1622).